The chain runs to 188 residues: GTPase KRas (188 aa).

Residues 10-18 (GAGGVGKSA), 29-35 (VDEYDPT), 59-60 (AG), and 116-119 (NKCD) contribute to the GTP site. The short motif at 32–40 (YDPTIEDSY) is the Effector region element. Residues 167-188 (KEKMSKEGKKKKKKSKTKCILM) form a disordered region. C185 is modified (cysteine methyl ester). The S-farnesyl cysteine moiety is linked to residue C185. Residues 186–188 (ILM) constitute a propeptide, removed in mature form.

This sequence belongs to the small GTPase superfamily. Ras family.

The protein localises to the cell membrane. It localises to the cytoplasm. The catalysed reaction is GTP + H2O = GDP + phosphate + H(+). Its activity is regulated as follows. Alternates between an inactive form bound to GDP and an active form bound to GTP. Activated by a guanine nucleotide-exchange factor (GEF) and inactivated by a GTPase-activating protein (GAP). In terms of biological role, ras proteins bind GDP/GTP and possess intrinsic GTPase activity. Plays an important role in the regulation of cell proliferation. The sequence is that of GTPase KRas (kras1) from Oryzias latipes (Japanese rice fish).